The primary structure comprises 385 residues: Protein kup-1 (385 aa).

Disordered stretches follow at residues 1-20 (MDDE…VRED) and 326-385 (SLAS…PDEY). Composition is skewed to basic and acidic residues over residues 8-20 (GSDH…VRED), 339-351 (RTDE…DDIV), and 364-385 (GRVE…PDEY).

This is Protein kup-1 (kup-1) from Caenorhabditis elegans.